Consider the following 363-residue polypeptide: MKIGVFVPIGNNGWLISTHAPQYMPTFELNKAIVQKAEHYHFDFALSMIKLRGFGGKTEFWDHNLESFTLMAGLAAVTSRIQIYATAATLTLPPAIVARMAATIDSISGGRFGVNLVTGWQKPEYEQMGIWPGDDYFSRRYDYLTEYVQVLRDLWGTGKSDFKGDFFTMNDCRVSPQPSVPMKVICAGQSDAGMAFSAQYADFNFCFGKGVNTPTAFAPTAARMKQAAEQTGRDVGSYVLFMVIADETDDAARAKWEHYKAGADEEALSWLTEQSQKDTRSGTDTNVRQMADPTSAVNINMGTLVGSYASVARMLDEVASVPGAEGVLLTFDDFLSGIETFGERIQPLMQCRAHLPALTQEVA.

FMN contacts are provided by residues Ile49–Lys50, Asn115, Glu124, Arg140–Tyr141, and Ser190.

The protein belongs to the NtaA/SnaA/DszA monooxygenase family. RutA subfamily.

It catalyses the reaction uracil + FMNH2 + NADH + O2 = (Z)-3-ureidoacrylate + FMN + NAD(+) + H2O + H(+). The catalysed reaction is thymine + FMNH2 + NADH + O2 = (Z)-2-methylureidoacrylate + FMN + NAD(+) + H2O + H(+). Catalyzes the pyrimidine ring opening between N-3 and C-4 by an unusual flavin hydroperoxide-catalyzed mechanism, adding oxygen atoms in the process to yield ureidoacrylate peracid, that immediately reacts with FMN forming ureidoacrylate and FMN-N(5)-oxide. The FMN-N(5)-oxide reacts spontaneously with NADH to produce FMN. Requires the flavin reductase RutF to regenerate FMN in vivo. In Escherichia coli O103:H2 (strain 12009 / EHEC), this protein is Pyrimidine monooxygenase RutA.